The following is a 557-amino-acid chain: Inositol-3-phosphate synthase 1 (557 aa).

Glycine 67, glycine 68, asparagine 69, asparagine 70, aspartate 141, serine 177, valine 178, glutamine 188, arginine 191, threonine 228, alanine 229, asparagine 230, threonine 231, glycine 278, serine 279, aspartate 303, serine 306, asparagine 337, asparagine 338, aspartate 339, and lysine 352 together coordinate NAD(+). Serine 279 is subject to Phosphoserine. Serine 357 is modified (phosphoserine). NAD(+)-binding residues include glycine 390, aspartate 391, aspartate 419, and serine 420. Serine 523 is subject to Phosphoserine. The disordered stretch occupies residues 527 to 557; sequence CKKGSAPTAPNGCTGDANGHSQAEAPQMPTT.

The protein belongs to the myo-inositol 1-phosphate synthase family. Requires NAD(+) as cofactor. As to expression, expressed in testis (at protein level).

The protein localises to the cytoplasm. The catalysed reaction is D-glucose 6-phosphate = 1D-myo-inositol 3-phosphate. It functions in the pathway polyol metabolism; myo-inositol biosynthesis; myo-inositol from D-glucose 6-phosphate: step 1/2. Key enzyme in myo-inositol biosynthesis pathway that catalyzes the conversion of glucose 6-phosphate to 1-myo-inositol 1-phosphate in a NAD-dependent manner. Rate-limiting enzyme in the synthesis of all inositol-containing compounds. This chain is Inositol-3-phosphate synthase 1 (ISYNA1), found in Bos taurus (Bovine).